A 113-amino-acid chain; its full sequence is Cysteine proteinase inhibitor 6 (113 aa).

A signal peptide spans 1–18 (MAMTTRTLLLAAVCAAAA). The short motif at 65–69 (QVVSG) is the Secondary area of contact element.

It belongs to the cystatin family. Phytocystatin subfamily.

It localises to the secreted. In terms of biological role, specific inhibitor of cysteine proteinases. Probably involved in the regulation of endogenous processes and in defense against pests and pathogens. This Oryza sativa subsp. japonica (Rice) protein is Cysteine proteinase inhibitor 6.